The chain runs to 148 residues: Lysozyme C (148 aa).

The N-terminal stretch at 1 to 18 is a signal peptide; that stretch reads MRALIILGLVLLSVTVQG. The C-type lysozyme domain occupies 19 to 148; the sequence is KIFERCELAR…VSQYVKGCGV (130 aa). Cystine bridges form between C24–C146, C48–C134, C83–C99, and C95–C113. Residues E53 and D71 contribute to the active site.

It belongs to the glycosyl hydrolase 22 family. As to quaternary structure, monomer.

The protein resides in the secreted. It carries out the reaction Hydrolysis of (1-&gt;4)-beta-linkages between N-acetylmuramic acid and N-acetyl-D-glucosamine residues in a peptidoglycan and between N-acetyl-D-glucosamine residues in chitodextrins.. In terms of biological role, lysozymes have primarily a bacteriolytic function; those in tissues and body fluids are associated with the monocyte-macrophage system and enhance the activity of immunoagents. Also plays a role in digestion in this species. This chain is Lysozyme C (LYZ), found in Trachypithecus francoisi (Francois' leaf monkey).